The chain runs to 200 residues: Phospholipase A2 inhibitor gamma subunit B (200 aa).

The first 19 residues, 1-19 (MKFLLFCCLFGTFLATGMC), serve as a signal peptide directing secretion. 8 disulfide bridges follow: Cys22/Cys46, Cys25/Cys32, Cys39/Cys67, Cys73/Cys94, Cys95/Cys100, Cys120/Cys145, Cys138/Cys165, and Cys171/Cys191.

Belongs to the CNF-like-inhibitor family. As to quaternary structure, heteromer composed of subunit A and subunit B.

It is found in the secreted. Inhibits the enzymatic activity of the phospholipase A2 (PLA2). The chain is Phospholipase A2 inhibitor gamma subunit B from Elaphe climacophora (Japanese rat snake).